The sequence spans 741 residues: Transketolase, chloroplastic (741 aa).

Positions 1 to 19 (MAASSSLSTLSHHQTLLSH) are enriched in low complexity. A disordered region spans residues 1–33 (MAASSSLSTLSHHQTLLSHPKTHLPTTPASSLL). The transit peptide at 1-66 (MAASSSLSTL…VGSASAVVRA (66 aa)) directs the protein to the chloroplast. The segment covering 24–33 (LPTTPASSLL) has biased composition (polar residues). His-103 serves as a coordination point for substrate. Thiamine diphosphate is bound by residues His-143 and 192-194 (GPL). Residue Asp-233 participates in Mg(2+) binding. 2 residues coordinate thiamine diphosphate: Gly-234 and Asn-263. The Mg(2+) site is built by Asn-263 and Ile-265. Residues His-340, Arg-434, and Ser-461 each coordinate substrate. His-340 contributes to the thiamine diphosphate binding site. Positions 488 and 515 each coordinate thiamine diphosphate. Glu-488 (proton donor) is an active-site residue. His-539, Asp-547, and Arg-598 together coordinate substrate.

The protein belongs to the transketolase family. As to quaternary structure, homodimer. The cofactor is Mg(2+). It depends on Ca(2+) as a cofactor. Mn(2+) serves as cofactor. Co(2+) is required as a cofactor. Requires thiamine diphosphate as cofactor.

It is found in the plastid. Its subcellular location is the chloroplast thylakoid membrane. It catalyses the reaction D-sedoheptulose 7-phosphate + D-glyceraldehyde 3-phosphate = aldehydo-D-ribose 5-phosphate + D-xylulose 5-phosphate. The protein operates within carbohydrate biosynthesis; Calvin cycle. Catalyzes the reversible transfer of a two-carbon ketol group from fructose-6-phosphate or sedoheptulose-7-phosphate to glyceraldehyde-3-phosphate to yield xylulose-5-phosphate and erythrose-4-phosphate or ribose-5-phosphate, respectively. In Spinacia oleracea (Spinach), this protein is Transketolase, chloroplastic.